The sequence spans 150 residues: 3-dehydroquinate dehydratase (150 aa).

Y26 acts as the Proton acceptor in catalysis. 3 residues coordinate substrate: N77, H83, and D90. H103 acts as the Proton donor in catalysis. Residues 104–105 (LS) and R114 contribute to the substrate site.

The protein belongs to the type-II 3-dehydroquinase family. In terms of assembly, homododecamer.

The enzyme catalyses 3-dehydroquinate = 3-dehydroshikimate + H2O. Its pathway is metabolic intermediate biosynthesis; chorismate biosynthesis; chorismate from D-erythrose 4-phosphate and phosphoenolpyruvate: step 3/7. Catalyzes a trans-dehydration via an enolate intermediate. This is 3-dehydroquinate dehydratase from Yersinia pseudotuberculosis serotype O:1b (strain IP 31758).